The following is a 349-amino-acid chain: 5-deoxyribose 1-phosphate isomerase (349 aa).

Substrate is bound by residues 49–51, Arg92, and Gln199; that span reads RGA. Asp240 (proton donor) is an active-site residue. Substrate is bound at residue 250 to 251; sequence NK.

The protein belongs to the EIF-2B alpha/beta/delta subunits family. DrdI subfamily.

It catalyses the reaction 5-deoxy-alpha-D-ribose 1-phosphate = 5-deoxy-D-ribulose 1-phosphate. Its pathway is carbohydrate degradation. Its function is as follows. Catalyzes the isomerization of 5-deoxy-alpha-D-ribose 1-phosphate to 5-deoxy-D-ribulose 1-phosphate, as part of a 5-deoxyribose salvage pathway that recycles this toxic radical SAM enzyme by-product to mainstream metabolites. This chain is 5-deoxyribose 1-phosphate isomerase, found in Clostridium botulinum (strain Kyoto / Type A2).